A 337-amino-acid chain; its full sequence is MIQQAIAKVLEGEDLTRAEAASVMTEIADGGATPAQSGAFLAALRMKGETVDEIAGAADVMRQRADRVRVDRDVFIDTCGTGGDGRHTFNISTTAAFVAAGAGVCVAKHGNRAVSSRSGSADVLAALGVNVDADKETVERCIEEVGIGFLFAVRLHPAFKAIAGVRRELGVRTIFNLLGPLANPAGARHQVLGVYEARWVPVLGGVLAALGAAHAFVVHGEGLDEIAVTGMTHVCEVRDGQVERYTIRPEDLGLPRRDAAELVGGDAAANARIVTDVLEGQAGGPRDAVLANAAAALVCAGAAKDLRDGVARAARSIDSGAAREKLRQLVAATTVPA.

5-phospho-alpha-D-ribose 1-diphosphate-binding positions include G80, G83–D84, T88, N90–T93, K108–S116, and S120. Residue G80 participates in anthranilate binding. S92 contacts Mg(2+). N111 is a binding site for anthranilate. Anthranilate is bound at residue R166. Residues D224 and E225 each coordinate Mg(2+).

This sequence belongs to the anthranilate phosphoribosyltransferase family. As to quaternary structure, homodimer. Requires Mg(2+) as cofactor.

The catalysed reaction is N-(5-phospho-beta-D-ribosyl)anthranilate + diphosphate = 5-phospho-alpha-D-ribose 1-diphosphate + anthranilate. It functions in the pathway amino-acid biosynthesis; L-tryptophan biosynthesis; L-tryptophan from chorismate: step 2/5. Functionally, catalyzes the transfer of the phosphoribosyl group of 5-phosphorylribose-1-pyrophosphate (PRPP) to anthranilate to yield N-(5'-phosphoribosyl)-anthranilate (PRA). In Anaeromyxobacter sp. (strain K), this protein is Anthranilate phosphoribosyltransferase.